The chain runs to 224 residues: Large ribosomal subunit protein uL16z (224 aa).

This sequence belongs to the universal ribosomal protein uL16 family. As to quaternary structure, component of the small ribosomal subunit. Mature ribosomes consist of a small (40S) and a large (60S) subunit. The 40S subunit contains about 33 different proteins and 1 molecule of RNA (18S). The 60S subunit contains about 49 different proteins and 3 molecules of RNA (25S, 5.8S and 5S).

The polypeptide is Large ribosomal subunit protein uL16z (SC34) (Oryza sativa subsp. indica (Rice)).